Consider the following 643-residue polypeptide: Protein THEMIS2 (643 aa).

CABIT regions lie at residues Met-1 to Ser-238 and Arg-239 to Gly-514. A disordered region spans residues Glu-546 to Asp-631. Residue Thr-593 is modified to Phosphothreonine. A compositionally biased stretch (basic residues) spans Pro-609–Lys-619. A Phosphotyrosine modification is found at Tyr-632.

The protein belongs to the themis family. As to quaternary structure, interacts with VAV1. Interacts with LAT. Interacts constitutively with GRB2, LYN and PLCG2; these interactions increase the activation of PLCG2 and its downstream pathways following B cell receptor stimulation. In terms of processing, phosphorylation at Tyr-632 is induced by LPS. Phosphorylated by Src kinases (Lck or Fyn) following BCR engagement. In terms of tissue distribution, expressed in different endometrial adenocarcinoma cell lines and various other cell lines apart from the prostate cell line LNCaP and the ovarian cancer cell line BG1.

Its subcellular location is the nucleus. The protein resides in the cytoplasm. May constitute a control point in macrophage inflammatory response, promoting LPS-induced TLR4-mediated TNF production. Determines the threshold for activation of B cells by low-affinity and low-avidity ligands via PLCG2 activation and its downstream pathways. This Homo sapiens (Human) protein is Protein THEMIS2.